Here is an 87-residue protein sequence, read N- to C-terminus: U3-theraphotoxin-Cg1b (87 aa).

An N-terminal signal peptide occupies residues 1–23 (MRTFTLIAILTCAVLVIFHVSAA). The propeptide occupies 24–48 (EELEAQDVIQPEDIFTGVATLEEDR). Intrachain disulfides connect C52-C65, C56-C79, and C73-C84.

The protein belongs to the neurotoxin 12 (Hwtx-2) family. 03 (juruin) subfamily. Expressed by the venom gland.

It is found in the secreted. Functionally, probable ion channel inhibitor. The sequence is that of U3-theraphotoxin-Cg1b from Chilobrachys guangxiensis (Chinese earth tiger tarantula).